The chain runs to 87 residues: Large ribosomal subunit protein eL31 (87 aa).

It belongs to the eukaryotic ribosomal protein eL31 family.

This is Large ribosomal subunit protein eL31 from Methanoculleus marisnigri (strain ATCC 35101 / DSM 1498 / JR1).